A 308-amino-acid polypeptide reads, in one-letter code: Isoflavone reductase homolog (308 aa).

NADP(+)-binding positions include 11 to 17 (GGTGYIG), R36, and K45. The active-site Proton acceptor is the K133. Residue R137 coordinates NADP(+).

The protein belongs to the NmrA-type oxidoreductase family. Isoflavone reductase subfamily.

The protein resides in the cytoplasm. The chain is Isoflavone reductase homolog from Solanum tuberosum (Potato).